The primary structure comprises 514 residues: Chromosomal replication initiator protein DnaA (514 aa).

Residues 1 to 90 (MSVELWQQCV…KRSRTPRAAI (90 aa)) are domain I, interacts with DnaA modulators. Positions 91–177 (VPSQTHVAPP…QVEGALKHTS (87 aa)) are domain II. The domain III, AAA+ region stretch occupies residues 178 to 394 (YLNRTFTFEN…GALKRVIAHS (217 aa)). Glycine 222, glycine 224, lysine 225, and threonine 226 together coordinate ATP. Residues 395–514 (HFMGRPITIE…YKNLLRTLTT (120 aa)) are domain IV, binds dsDNA.

The protein belongs to the DnaA family. As to quaternary structure, oligomerizes as a right-handed, spiral filament on DNA at oriC.

It localises to the cytoplasm. Its function is as follows. Plays an essential role in the initiation and regulation of chromosomal replication. ATP-DnaA binds to the origin of replication (oriC) to initiate formation of the DNA replication initiation complex once per cell cycle. Binds the DnaA box (a 9 base pair repeat at the origin) and separates the double-stranded (ds)DNA. Forms a right-handed helical filament on oriC DNA; dsDNA binds to the exterior of the filament while single-stranded (ss)DNA is stabiized in the filament's interior. The ATP-DnaA-oriC complex binds and stabilizes one strand of the AT-rich DNA unwinding element (DUE), permitting loading of DNA polymerase. After initiation quickly degrades to an ADP-DnaA complex that is not apt for DNA replication. Binds acidic phospholipids. The chain is Chromosomal replication initiator protein DnaA from Pseudomonas aeruginosa (strain LESB58).